We begin with the raw amino-acid sequence, 270 residues long: Regulatory protein RecX (270 aa).

This sequence belongs to the RecX family.

It is found in the cytoplasm. In terms of biological role, modulates RecA activity. This chain is Regulatory protein RecX, found in Bacillus cytotoxicus (strain DSM 22905 / CIP 110041 / 391-98 / NVH 391-98).